The chain runs to 284 residues: Efem/EfeO family lipoprotein (284 aa).

The signal sequence occupies residues 1-17 (MKKLTTLLLASTLLIAA). Cysteine 18 carries the N-palmitoyl cysteine lipid modification. The S-diacylglycerol cysteine moiety is linked to residue cysteine 18.

Belongs to the EfeM/EfeO family.

The protein resides in the cell membrane. The chain is Efem/EfeO family lipoprotein from Staphylococcus aureus (strain MSSA476).